Reading from the N-terminus, the 39-residue chain is SYSMEHFRWGKPMGRKRRPIKVYPNSFEDESVENMGPEL.

M13 carries the post-translational modification Methionine amide.

It belongs to the POMC family.

It is found in the secreted. Precursor protein for pituitary hormones that regulate stress and environmental adaptation. In terms of biological role, stimulates the adrenal glands to release cortisol. Functionally, anorexigenic peptide. Increases the pigmentation of skin by increasing melanin production in melanocytes. This Squalus acanthias (Spiny dogfish) protein is Pro-opiomelanocortin (pomc).